A 426-amino-acid chain; its full sequence is Tetracenomycin polyketide synthase ketoacyl synthase alpha subunit (426 aa).

In terms of domain architecture, Ketosynthase family 3 (KS3) spans 6 to 420 (EKRVVITGIG…GFQSAAVLAR (415 aa)). Active-site for beta-ketoacyl synthase activity residues include C173, H313, and H350.

Belongs to the thiolase-like superfamily. Beta-ketoacyl-ACP synthases family. The tetracenomycin polyketide synthase (TCM PKS) is composed of a ketosynthase complex (TcmKL), an acyl carrier protein (TcmM), a cyclase (TcmN) and a probable second cyclase (TcmJ). TcmK and TcmL form a heterodimeric complex.

The enzyme catalyses 10 malonyl-CoA + 8 H(+) = tetracenomycin F2 + 10 CO2 + 10 CoA + 2 H2O. Its pathway is antibiotic biosynthesis; tetracenomycin C biosynthesis. In terms of biological role, involved in the biosynthesis of tetracenomycin C (TCM C). Part of a type II polyketide synthase (PKS) that catalyzes the synthesis of tetracenomycin F2 (TCM F2), a precursor of TCM C, from malonyl-CoA. TcmK and TcmL form a heterodimeric alpha-beta complex that catalyzes the condensation reactions between the growing acyl-enzyme chain and the malonyl-CoA extender units. This chain is Tetracenomycin polyketide synthase ketoacyl synthase alpha subunit, found in Streptomyces glaucescens.